Here is a 310-residue protein sequence, read N- to C-terminus: Probable plastid-lipid-associated protein 2, chloroplastic (310 aa).

Residues 1 to 59 (MATVQLSTQFSCQTRVSISPNSKSISKPPFLVPVTSIIHRPMISTGGIAVSPRRVFKVR) constitute a chloroplast transit peptide. Thr-61 is modified (phosphothreonine). Residues 65–94 (EIGSALLAAEEAIEDVEETERLKRSLVDSL) adopt a coiled-coil conformation.

Belongs to the PAP/fibrillin family.

The protein localises to the plastid. It localises to the chloroplast. The protein resides in the plastoglobule. Probably involved in light/cold stress-related jasmonate (JA) biosynthesis. The chain is Probable plastid-lipid-associated protein 2, chloroplastic (PAP2) from Arabidopsis thaliana (Mouse-ear cress).